Consider the following 113-residue polypeptide: Endoribonuclease SymE (113 aa).

The SpoVT-AbrB domain maps to 29–74 (SRYPDYSRIPAITLKGQWLEAAGFATGTAVDVKVMEGCIVLTAQPA).

This sequence belongs to the SymE family.

It is found in the cytoplasm. In terms of biological role, involved in the degradation and recycling of damaged RNA. It is itself a target for degradation by the ATP-dependent protease Lon. In Shigella flexneri serotype 5b (strain 8401), this protein is Endoribonuclease SymE.